The following is a 122-amino-acid chain: Large ribosomal subunit protein uL14 (122 aa).

Belongs to the universal ribosomal protein uL14 family. As to quaternary structure, part of the 50S ribosomal subunit. Forms a cluster with proteins L3 and L19. In the 70S ribosome, L14 and L19 interact and together make contacts with the 16S rRNA in bridges B5 and B8.

Binds to 23S rRNA. Forms part of two intersubunit bridges in the 70S ribosome. In Leptothrix cholodnii (strain ATCC 51168 / LMG 8142 / SP-6) (Leptothrix discophora (strain SP-6)), this protein is Large ribosomal subunit protein uL14.